Consider the following 273-residue polypeptide: Polyamine aminopropyltransferase (273 aa).

A PABS domain is found at 5–238; the sequence is ENWFSERYSD…GFWSFTIASE (234 aa). Residue glutamine 34 coordinates S-methyl-5'-thioadenosine. Positions 65 and 90 each coordinate spermidine. Residues glutamate 109 and 140 to 141 contribute to the S-methyl-5'-thioadenosine site; that span reads DG. The active-site Proton acceptor is aspartate 158. Residue 158–161 coordinates spermidine; that stretch reads DSTD. An S-methyl-5'-thioadenosine-binding site is contributed by proline 165.

This sequence belongs to the spermidine/spermine synthase family. Homodimer or homotetramer.

It localises to the cytoplasm. It catalyses the reaction S-adenosyl 3-(methylsulfanyl)propylamine + putrescine = S-methyl-5'-thioadenosine + spermidine + H(+). It participates in amine and polyamine biosynthesis; spermidine biosynthesis; spermidine from putrescine: step 1/1. Catalyzes the irreversible transfer of a propylamine group from the amino donor S-adenosylmethioninamine (decarboxy-AdoMet) to putrescine (1,4-diaminobutane) to yield spermidine. The protein is Polyamine aminopropyltransferase of Thermoplasma volcanium (strain ATCC 51530 / DSM 4299 / JCM 9571 / NBRC 15438 / GSS1).